The sequence spans 292 residues: Undecaprenyl-diphosphatase (292 aa).

Helical transmembrane passes span M1–V21, F46–I66, A88–L108, A114–A134, F192–P212, V225–W245, and V253–V273.

This sequence belongs to the UppP family.

The protein resides in the cell inner membrane. The catalysed reaction is di-trans,octa-cis-undecaprenyl diphosphate + H2O = di-trans,octa-cis-undecaprenyl phosphate + phosphate + H(+). In terms of biological role, catalyzes the dephosphorylation of undecaprenyl diphosphate (UPP). Confers resistance to bacitracin. The protein is Undecaprenyl-diphosphatase of Anaeromyxobacter dehalogenans (strain 2CP-C).